The primary structure comprises 377 residues: MKFPGPLENQRLSFLLEKAITREAQMWKVNVRKMPSNQNVSPSQRDEVIQWLAKLKYQFNLYPETFALASSLLDRFLATVKAHPKYLSCIAISCFFLAAKTVEEDERIPVLKVLARDSFCGCSSSEILRMERIILDKLNWDLHTATPLDFLHIFHAIAVSTRPQLLFSLPKLSPSQHLAVLTKQLLHCMACNQLLQFRGSMLALAMVSLEMEKLIPDWLSLTIELLQKAQMDSSQLIHCRELVAHHLSTLQSSLPLNSVYVYRPLKHTLVTCDKGVFRLHPSSVPGPDFSKDNSKPEVPVRGTAAFYHHLPAASGCKQTSTKRKVEEMEVDDFYDGIKRLYNEDNVSENVGSVCGTDLSRQEGHASPCPPLQPVSVM.

A disordered region spans residues 357–377 (DLSRQEGHASPCPPLQPVSVM). Over residues 367-377 (PCPPLQPVSVM) the composition is skewed to pro residues.

It belongs to the cyclin family. As to expression, highest levels in adult heart, brain and skeletal muscle. Lower levels in adult placenta, lung, kidney and pancreas. Also high levels in fetal brain and lower levels in fetal lung, liver and kidney. Also abundant in testis and thyroid.

It localises to the nucleus membrane. This is Cyclin-I from Homo sapiens (Human).